Consider the following 865-residue polypeptide: Leucine--tRNA ligase (865 aa).

The 'HIGH' region motif lies at 58 to 68 (PYPSGNLHMGH). Residues 629 to 633 (KMSKS) carry the 'KMSKS' region motif. An ATP-binding site is contributed by Lys-632.

The protein belongs to the class-I aminoacyl-tRNA synthetase family.

The protein resides in the cytoplasm. The enzyme catalyses tRNA(Leu) + L-leucine + ATP = L-leucyl-tRNA(Leu) + AMP + diphosphate. The chain is Leucine--tRNA ligase from Synechococcus sp. (strain ATCC 27144 / PCC 6301 / SAUG 1402/1) (Anacystis nidulans).